Consider the following 567-residue polypeptide: MEVEMHGDVSKWEGYADWRNKAALRGRHGGMLAASFVLAVEILENLAFLANASNLVLYLKNFMHMSLARSSSEVTTFMATAFLLALLGGFLADAFFSTFVIFLISASIEFLGLILLTIQARRPSLMPPPCKSSAALRCEVVGGSKAAFLFVGLYLVSLGIGGIKGSLPSHGAEQFDEGTPKGRKQRSTFFNYYVFCLSCGALVAVTFVVWIEDNKGWEWGFGVSTISIFLSILVFLLGSRFYKNKIPRGSPLTTIFKVLLAASIVSCSSKTSSNHFTSREVQSEHEEKTPSQSLTNSLTCLNKAIEGKTHHIWLECTVQQVEDVKIVLKMLPIFGCTIMLNCCLAQLSTYSVHQAATMNRKIVNFNVPSASLPVFPVVFMLILAPTYDHLIIPFARKVTKSEIGITHLQRIGVGLVLSIVAMAVAALVELKRKQVAREAGLLDSEETLPITFLWIALQYLFLGSADLFTLAGLLEFFFTEAPSSMRSLATSLSWASLALGYYLSSVMVPIVNRVTKSAGQSPWLGEKLNRNRLDLFYWLMCVLSVVNFLHYLFWAKRYKYISTGSIS.

12 consecutive transmembrane segments (helical) span residues 30–50 (GMLAASFVLAVEILENLAFLA), 70–92 (SSSEVTTFMATAFLLALLGGFLA), 99–118 (FVIFLISASIEFLGLILLTI), 147–167 (AFLFVGLYLVSLGIGGIKGSL), 189–209 (FFNYYVFCLSCGALVAVTFVV), 219–239 (WGFGVSTISIFLSILVFLLGS), 326–346 (IVLKMLPIFGCTIMLNCCLAQ), 374–394 (VFPVVFMLILAPTYDHLIIPF), 411–431 (IGVGLVLSIVAMAVAALVELK), 448–468 (LPITFLWIALQYLFLGSADLF), 491–511 (SLSWASLALGYYLSSVMVPIV), and 535–555 (LFYWLMCVLSVVNFLHYLFWA).

The protein belongs to the major facilitator superfamily. Proton-dependent oligopeptide transporter (POT/PTR) (TC 2.A.17) family. As to expression, expressed in flowers and siliques.

It is found in the membrane. Its function is as follows. Involved in abscisic acid transport. The polypeptide is Protein NRT1/ PTR FAMILY 4.5 (NPF4.5) (Arabidopsis thaliana (Mouse-ear cress)).